Reading from the N-terminus, the 295-residue chain is Protoheme IX farnesyltransferase (295 aa).

A run of 9 helical transmembrane segments spans residues 8 to 28, 35 to 55, 83 to 103, 107 to 127, 132 to 152, 162 to 182, 208 to 228, 229 to 249, and 263 to 283; these read ITKP…FFLA, GGLF…GCVF, GVTL…LWFG, LATA…SLYL, IYGT…GYCA, LTLL…IAIF, IFWY…GGYA, GYGY…MALR, and VFIF…IDFQ.

This sequence belongs to the UbiA prenyltransferase family. Protoheme IX farnesyltransferase subfamily.

It localises to the cell inner membrane. It catalyses the reaction heme b + (2E,6E)-farnesyl diphosphate + H2O = Fe(II)-heme o + diphosphate. Its pathway is porphyrin-containing compound metabolism; heme O biosynthesis; heme O from protoheme: step 1/1. Functionally, converts heme B (protoheme IX) to heme O by substitution of the vinyl group on carbon 2 of heme B porphyrin ring with a hydroxyethyl farnesyl side group. This is Protoheme IX farnesyltransferase from Chromohalobacter salexigens (strain ATCC BAA-138 / DSM 3043 / CIP 106854 / NCIMB 13768 / 1H11).